A 187-amino-acid polypeptide reads, in one-letter code: Endoribonuclease YbeY (187 aa).

Zn(2+) contacts are provided by His151, His155, and His161.

It belongs to the endoribonuclease YbeY family. Zn(2+) is required as a cofactor.

Its subcellular location is the cytoplasm. Functionally, single strand-specific metallo-endoribonuclease involved in late-stage 70S ribosome quality control and in maturation of the 3' terminus of the 16S rRNA. In Prochlorococcus marinus (strain MIT 9313), this protein is Endoribonuclease YbeY.